We begin with the raw amino-acid sequence, 395 residues long: Probable eukaryotic translation initiation factor 5 (395 aa).

Gly-28 to Thr-35 contributes to the GTP binding site. 2 disordered regions span residues Pro-146–Glu-171 and Leu-374–Glu-395. Basic residues predominate over residues Pro-147–Arg-157. 2 stretches are compositionally biased toward acidic residues: residues Val-161 to Asp-170 and Ala-377 to Glu-395. Residues Glu-228–Glu-384 form the W2 domain.

It belongs to the eIF-2-beta/eIF-5 family. As to quaternary structure, monomer.

Its function is as follows. Catalyzes the hydrolysis of GTP bound to the 40S ribosomal initiation complex (40S.mRNA.Met-tRNA[F].eIF-2.GTP) with the subsequent joining of a 60S ribosomal subunit resulting in the release of eIF-2 and the guanine nucleotide. The subsequent joining of a 60S ribosomal subunit results in the formation of a functional 80S initiation complex (80S.mRNA.Met-tRNA[F]). This chain is Probable eukaryotic translation initiation factor 5 (tif5), found in Schizosaccharomyces pombe (strain 972 / ATCC 24843) (Fission yeast).